Consider the following 274-residue polypeptide: MSVQSAIKRKTAPEIRARKGGDPVVMLTSYHAHTAALVDRYCDVILVGDSLGNVMHGFETTVPVTLDMMILQGRAVMRGSKEALVVVDMPFGSYEASKEQAFHSAVRIMKESLCGAVKLEGGVKMAETIRFLSERGVPVMGHIGLTPQSINTLGSFRAQGREESNWAPIEADARAVAEAGAFSVVIEAVAEPLARKITADIAIPTIGIGASAACDGQVLVLEDMLGLSPWAPKFVKRFGDLGPGIEAAIKDYADEVRSRAFPGPEHVYGMKAKS.

2 residues coordinate Mg(2+): D49 and D88. Residues 49 to 50 (DS), D88, and K118 contribute to the 3-methyl-2-oxobutanoate site. Mg(2+) is bound at residue E120. E187 (proton acceptor) is an active-site residue.

Belongs to the PanB family. Homodecamer; pentamer of dimers. The cofactor is Mg(2+).

Its subcellular location is the cytoplasm. It carries out the reaction 3-methyl-2-oxobutanoate + (6R)-5,10-methylene-5,6,7,8-tetrahydrofolate + H2O = 2-dehydropantoate + (6S)-5,6,7,8-tetrahydrofolate. It participates in cofactor biosynthesis; (R)-pantothenate biosynthesis; (R)-pantoate from 3-methyl-2-oxobutanoate: step 1/2. In terms of biological role, catalyzes the reversible reaction in which hydroxymethyl group from 5,10-methylenetetrahydrofolate is transferred onto alpha-ketoisovalerate to form ketopantoate. The sequence is that of 3-methyl-2-oxobutanoate hydroxymethyltransferase from Rhodopseudomonas palustris (strain BisB18).